The following is a 373-amino-acid chain: Molybdenum import ATP-binding protein ModC (373 aa).

Positions 4–240 (LTPPTIRAAF…PKLPLAIARD (237 aa)) constitute an ABC transporter domain. Position 38-45 (38-45 (GPSGCGKS)) interacts with ATP. The Mop domain maps to 299-369 (ASSILNAIAA…IKGVALAPGR (71 aa)).

It belongs to the ABC transporter superfamily. Molybdate importer (TC 3.A.1.8) family. In terms of assembly, the complex is composed of two ATP-binding proteins (ModC), two transmembrane proteins (ModB) and a solute-binding protein (ModA).

It is found in the cell inner membrane. The enzyme catalyses molybdate(out) + ATP + H2O = molybdate(in) + ADP + phosphate + H(+). Its function is as follows. Part of the ABC transporter complex ModABC involved in molybdenum import. Responsible for energy coupling to the transport system. The sequence is that of Molybdenum import ATP-binding protein ModC from Rhodopseudomonas palustris (strain ATCC BAA-98 / CGA009).